We begin with the raw amino-acid sequence, 550 residues long: MALWRGGGALGLLLLSAACLIPPSAQVRRLARCPATCSCTKESIICVGSSWVPRIVPGDISSLSLVNGTFLEIKDRMFSHLPSLQLLLLNSNSFTVIRDDAFAGLFHLEYLFIEGNKIETISRNAFRGLRDLTHLDLRGNKFECDCKAKWLYLWLKMTNSTVSDVLCIGPPEYQEKKLNEVTSFDYECTTTGPQTDEAKQRGWQLELSLGFCELIFVFQHPLSDFVVHQTLPYQSVSVDTFNSKNDVYVAIAQPSMENCMVLEWDHIEMNFRSYDNITGQSIVGCKAILIDDQVFVVVAQLFGGSHIYKYDESWTKFVKFQDIEVSRISKPNDIELFEIDDETFFIIADSSKAGLSTVYKWNSKGFYSYQSLHEWFRDTDAEFVDIDGKSHLILSSRSQVPIILQWNKSSKKFVPHGDIPNMEDVLAVKSFRMQNTLYLSLTRFIGDSRVMRWNSKQFVEVQALPSRGAMTLQPFSFKDNHYLALGSDYTFSQIYQWDKEKQQFKKFKEIYVQAPRSFTAVSTDRRDFFFASSFKGKTKIFEHIIVDLSL.

The signal sequence occupies residues 1-25 (MALWRGGGALGLLLLSAACLIPPSA). In terms of domain architecture, LRRNT spans 26-62 (QVRRLARCPATCSCTKESIICVGSSWVPRIVPGDISS). Asn-67 is a glycosylation site (N-linked (GlcNAc...) asparagine). LRR repeat units follow at residues 83-104 (SLQLLLLNSNSFTVIRDDAFAG) and 107-128 (HLEYLFIEGNKIETISRNAFRG). Residues 140–190 (NKFECDCKAKWLYLWLKMTNSTVSDVLCIGPPEYQEKKLNEVTSFDYECTT) enclose the LRRCT domain. Asn-159 carries N-linked (GlcNAc...) asparagine glycosylation. 7 EAR repeats span residues 224–266 (DFVV…EWDH), 270–312 (NFRS…KYDE), 316–363 (KFVK…KWNS), 365–408 (GFYS…QWNK), 412–455 (KFVP…RWNS), 457–499 (QFVE…QWDK), and 503–545 (QFKK…EHII). An N-linked (GlcNAc...) asparagine glycan is attached at Asn-276. An N-linked (GlcNAc...) asparagine glycan is attached at Asn-407.

Brain.

The protein resides in the secreted. Functionally, required for the development of soma-targeting inhibitory GABAergic synapses made by parvalbumin-positive basket cells. This chain is Leucine-rich repeat LGI family member 2 (Lgi2), found in Mus musculus (Mouse).